Reading from the N-terminus, the 378-residue chain is Queuine tRNA-ribosyltransferase (378 aa).

Asp91 functions as the Proton acceptor in the catalytic mechanism. Residues 91 to 95, Asp145, Gln189, and Gly216 each bind substrate; that span reads DSGGF. An RNA binding region spans residues 247–253; the sequence is GVGKPED. Asp266 serves as the catalytic Nucleophile. Residues 271 to 275 form an RNA binding; important for wobble base 34 recognition region; it reads TRNAR. Positions 304, 306, 309, and 335 each coordinate Zn(2+).

It belongs to the queuine tRNA-ribosyltransferase family. Homodimer. Within each dimer, one monomer is responsible for RNA recognition and catalysis, while the other monomer binds to the replacement base PreQ1. Requires Zn(2+) as cofactor.

It carries out the reaction 7-aminomethyl-7-carbaguanine + guanosine(34) in tRNA = 7-aminomethyl-7-carbaguanosine(34) in tRNA + guanine. It functions in the pathway tRNA modification; tRNA-queuosine biosynthesis. Functionally, catalyzes the base-exchange of a guanine (G) residue with the queuine precursor 7-aminomethyl-7-deazaguanine (PreQ1) at position 34 (anticodon wobble position) in tRNAs with GU(N) anticodons (tRNA-Asp, -Asn, -His and -Tyr). Catalysis occurs through a double-displacement mechanism. The nucleophile active site attacks the C1' of nucleotide 34 to detach the guanine base from the RNA, forming a covalent enzyme-RNA intermediate. The proton acceptor active site deprotonates the incoming PreQ1, allowing a nucleophilic attack on the C1' of the ribose to form the product. After dissociation, two additional enzymatic reactions on the tRNA convert PreQ1 to queuine (Q), resulting in the hypermodified nucleoside queuosine (7-(((4,5-cis-dihydroxy-2-cyclopenten-1-yl)amino)methyl)-7-deazaguanosine). In Vibrio atlanticus (strain LGP32) (Vibrio splendidus (strain Mel32)), this protein is Queuine tRNA-ribosyltransferase.